Consider the following 362-residue polypeptide: Serine/threonine-protein kinase-like protein At3g51990 (362 aa).

The first 24 residues, M1–G24, serve as a signal peptide directing secretion. Positions S21–A32 are enriched in low complexity. Residues S21–R43 are disordered. The region spanning F59–L329 is the Protein kinase domain. ATP is bound by residues L65–V73 and K86. Residue N136 is glycosylated (N-linked (GlcNAc...) asparagine). The active-site Proton acceptor is the D185. The residue at position 219 (S219) is a Phosphoserine. A phosphothreonine mark is found at T220 and T225. Y233 carries the post-translational modification Phosphotyrosine.

It belongs to the protein kinase superfamily. Ser/Thr protein kinase family.

Its subcellular location is the secreted. It catalyses the reaction L-seryl-[protein] + ATP = O-phospho-L-seryl-[protein] + ADP + H(+). The enzyme catalyses L-threonyl-[protein] + ATP = O-phospho-L-threonyl-[protein] + ADP + H(+). This chain is Serine/threonine-protein kinase-like protein At3g51990, found in Arabidopsis thaliana (Mouse-ear cress).